The chain runs to 558 residues: Protein shisa-7 (558 aa).

The N-terminal stretch at 1–22 is a signal peptide; it reads MPALLLLGTVALLASAAGPAGA. The Extracellular portion of the chain corresponds to 23–189; the sequence is RPSNDTSSVA…GGEGPGGSTA (167 aa). An N-linked (GlcNAc...) asparagine glycan is attached at asparagine 26. Disordered stretches follow at residues 53–79 and 142–181; these read GGSA…ARAP and TPPP…GRGG. Over residues 57-77 the composition is skewed to low complexity; that stretch reads AGTSANATKTSPASGTGAAAR. Gly residues predominate over residues 148-181; that stretch reads GGAGGAGGAGGGPGPGQAGWLEGGRAGGAGGRGG. Residues 154–175 form a GRID region; sequence GGAGGGPGPGQAGWLEGGRAGG. The helical transmembrane segment at 190–210 threads the bilayer; sequence YVVCGVISFALAVGVGAKVAF. Residues 211 to 558 lie on the Cytoplasmic side of the membrane; the sequence is SKASRAPRAH…RTASKNEVTV (348 aa). The tract at residues 236–263 is disordered; that stretch reads QAGPATRPDRARSSSLTPGLGGPDSMAP. Residue serine 438 is modified to Phosphoserine. A disordered region spans residues 443–506; sequence RQSREHLLSP…HHHHALHGSP (64 aa). Pro residues predominate over residues 453–462; that stretch reads PRSPALPPDP. Over residues 466 to 477 the composition is skewed to low complexity; the sequence is ASLAASHSNLLL. Threonine 532 bears the Phosphothreonine mark. Positions 555–558 match the PDZ-binding motif; the sequence is EVTV.

This sequence belongs to the shisa family. Interacts with GABA(A)R (GABA type A receptor) subunits GABRA1, GABRA2 and GABRG2; the interaction is direct. Does not interact with GABRB2 and GABRB3 subunits. Interacts with AMPAR subunits GRIA1, GRIA2 and GRIA3 and AMPAR auxiliary proteins SHISA6 and SHISA7 in heterologous cells. Interacts (via PDZ-binding motif) with DLG4/PSD-95 (via PDZ domain)in heterologous cells; the interaction is direct. Post-translationally, N-glycosylated. In terms of tissue distribution, mainly expressed in neurons. Highly expressed in brain structures including cortex, striatum, olfactory bulb, amygdala hippocampus CA1-3 and dentate gyrus (at protein level).

It localises to the postsynaptic density membrane. Transmembrane protein that regulates gamma-aminobutyric acid type A receptor (GABA(A)R) trafficking, channel deactivation kinetics and pharmacology, necessary for fast inhibitory transmission in the brain. Enhances the action of benzodiazepine, a primary GABA(A)Rs target drug, in the brain. May affect channel kinetics of AMPA-type glutamate receptors (AMPAR), the brain's main excitatory neurotransmitter, necessary for synaptic hippocampal plasticity, and memory recall. May regulate the induction and maintenance of long-term potentiation at Schaffer collaterals/CA3-CA1 excitatory synapses. This chain is Protein shisa-7, found in Mus musculus (Mouse).